The primary structure comprises 1009 residues: Type VII secretion system accessory factor EsaA (1009 aa).

The next 6 helical transmembrane spans lie at 7 to 27, 822 to 842, 869 to 889, 903 to 923, 928 to 948, and 979 to 999; these read IYALIVTLIIIIAIVSMIFFV, ISPTLFVLLMYLLSMITAYIF, VITSGVIGTTGLVEGLIVGLI, KFILMVILTMMVFVLINTYLL, SIGMFLMIAALGLYFVAMNNL, and IGLALVILTVLVIIGFVLNMF.

The protein belongs to the EsaA family. In terms of assembly, homodimer. Interacts with EssB.

The protein resides in the cell membrane. Its function is as follows. Component of the type VII secretion system (Ess). Provides together with EssB and other components such as EssC and EssE a secretion platform across the cytoplasmic membrane in the host. The chain is Type VII secretion system accessory factor EsaA from Staphylococcus aureus (strain MSSA476).